Consider the following 735-residue polypeptide: Nuclear intron maturase 2, mitochondrial (735 aa).

A mitochondrion-targeting transit peptide spans methionine 1–lysine 12. A Reverse transcriptase domain is found at arginine 161–leucine 460. An intron maturase type-2 region spans residues glycine 485 to aspartate 653. Residues serine 707–methionine 735 are disordered. Residues arginine 712–glutamate 721 are compositionally biased toward basic and acidic residues.

It belongs to the plant nuclear intron maturase (nMat) family. As to quaternary structure, associated to a large ribonucleoprotein complex in mitochondria containing group-II intron RNAs.

The protein localises to the mitochondrion. Nuclear-encoded maturase required for splicing of group-II introns in mitochondria. Involved in the splicing of mitochondrial COX2, NAD1 and NAD7 transcripts. Necessary for mitochondrial biogenesis during early developmental stages. The chain is Nuclear intron maturase 2, mitochondrial from Arabidopsis thaliana (Mouse-ear cress).